Here is a 174-residue protein sequence, read N- to C-terminus: Gamma-crystallin D (174 aa).

Beta/gamma crystallin 'Greek key' domains lie at 2 to 40 (GKITLYEDRGFQGRHYECSSDHPNLQPYLSRCNSARVDS) and 41 to 83 (GCWM…RLIP). The tract at residues 84–87 (HSGS) is connecting peptide. Beta/gamma crystallin 'Greek key' domains follow at residues 88–128 (HRIR…NVLE) and 129–171 (GSWV…RRVI).

Belongs to the beta/gamma-crystallin family. Monomer.

Crystallins are the dominant structural components of the vertebrate eye lens. The polypeptide is Gamma-crystallin D (CRYGD) (Homo sapiens (Human)).